Reading from the N-terminus, the 260-residue chain is NH(3)-dependent NAD(+) synthetase (260 aa).

Position 31–38 (31–38) interacts with ATP; the sequence is GLSGGLDS. Asp37 serves as a coordination point for Mg(2+). Arg112 provides a ligand contact to deamido-NAD(+). Thr132 contributes to the ATP binding site. Mg(2+) is bound at residue Glu137. ATP contacts are provided by Lys161 and Ser183.

The protein belongs to the NAD synthetase family. In terms of assembly, homodimer.

The catalysed reaction is deamido-NAD(+) + NH4(+) + ATP = AMP + diphosphate + NAD(+) + H(+). It functions in the pathway cofactor biosynthesis; NAD(+) biosynthesis; NAD(+) from deamido-NAD(+) (ammonia route): step 1/1. Catalyzes the ATP-dependent amidation of deamido-NAD to form NAD. Uses ammonia as a nitrogen source. This Helicobacter pylori (strain J99 / ATCC 700824) (Campylobacter pylori J99) protein is NH(3)-dependent NAD(+) synthetase.